Reading from the N-terminus, the 764-residue chain is Polyribonucleotide nucleotidyltransferase (764 aa).

2 residues coordinate Mg(2+): D555 and D561. The 60-residue stretch at 621–680 (PHITSINIPQNKIGEVIGPKGKTINQITEETGANITIEDDGTVFISAVGGESAREAEEKI) folds into the KH domain. One can recognise an S1 motif domain in the interval 692 to 761 (GDRFLGTVVK…NRGKISLVLV (70 aa)).

Belongs to the polyribonucleotide nucleotidyltransferase family. Mg(2+) serves as cofactor.

The protein localises to the cytoplasm. The enzyme catalyses RNA(n+1) + phosphate = RNA(n) + a ribonucleoside 5'-diphosphate. Its function is as follows. Involved in mRNA degradation. Catalyzes the phosphorolysis of single-stranded polyribonucleotides processively in the 3'- to 5'-direction. The sequence is that of Polyribonucleotide nucleotidyltransferase from Corynebacterium jeikeium (strain K411).